A 595-amino-acid polypeptide reads, in one-letter code: MAQAWAFLLPLLVLGSYVTSLFFPTYISNPLCGGDGGRSFHLCAQAPKDPDPPAVSTMYKTAFHFQPAKNWMNDPSGPMYFNGIYHEFYQYNLNGPIFGDIVWGHSVSTDLVNWIGLEPALVRDTPSDIDGCWTGSVTILPGGKPIIIYTGGDIDQNQAQNIAFPKNRSDPYLREWIKADNNPVLRPDEPGMNSIEFRDPTTGWIGPDGLWRMAVGGELNGYSAALLYKSEDFLNWTKVDHPLYSHNGSNMWECPDFFAVLPGNNAGLDLSAAIPQGAKHALKMSVDSVDKYMIGVYDLQRDAFVPDNVVDDRRLWLRIDYGTFYASKSFFDSNKNRRIIWGWSRETDSPSDDLAKGWAGLHTIPRTIWLAGDGKQLLQWPVEEIESLRTNEINHQGLELNKGDLFEIKEVDAFQADVEIDFELASIDDADRFDPSWLLDPEKHCGEAGASVPGGIGPFGLVILASDNMDEHTEVYFRVYKSEEKYMVLMCSDLRRSSLRPDLEKPAYGGFFEFDLEKERKISLRTLIDRSAVESFGGGGRVCITSRVYPAVLADVGRAHIYAFNNGSATVSVPQLSAWTMRKAQVNVEKGWSAI.

Positions Met1 to Ser20 are cleaved as a signal peptide. The active site involves Asp74. N-linked (GlcNAc...) asparagine glycans are attached at residues Asn167, Asn235, and Asn247. A disulfide bond links Cys445 and Cys491. Asn566 carries N-linked (GlcNAc...) asparagine glycosylation.

This sequence belongs to the glycosyl hydrolase 32 family.

The catalysed reaction is Hydrolysis of terminal, non-reducing (2-&gt;1)-linked beta-D-fructofuranose residues in fructans.. With respect to regulation, inhibited by sucrose. In terms of biological role, hydrolyzes inulin-type beta-(2,1)-fructans. May play a role as a beta-(2,1)-trimmer during graminan biosynthesis. This Aegilops speltoides (Goatgrass) protein is Fructan 1-exohydrolase.